The primary structure comprises 391 residues: Rhizopuspepsin-2 (391 aa).

The first 21 residues, 1–21 (MKLTLISSCVALAFMALATEA), serve as a signal peptide directing secretion. Residues 22–68 (APSGKKLSIPLTKNTNYKPSAKNAIQKALAKYHRFRTTSSSNSTSTE) constitute a propeptide, activation peptide. The 305-residue stretch at 84–388 (YYGKVTVGTP…NQEVPEVQIA (305 aa)) folds into the Peptidase A1 domain. The active site involves D102. C115 and C118 are disulfide-bonded. D285 is a catalytic residue. C319 and C352 are joined by a disulfide.

Belongs to the peptidase A1 family.

It carries out the reaction Hydrolysis of proteins with broad specificity similar to that of pepsin A, preferring hydrophobic residues at P1 and P1'. Clots milk and activates trypsinogen. Does not cleave 4-Gln-|-His-5, but does cleave 10-His-|-Leu-11 and 12-Val-|-Glu-13 in B chain of insulin.. This chain is Rhizopuspepsin-2, found in Rhizopus niveus.